The following is a 365-amino-acid chain: 7-methylxanthine methyltransferase PCS1 (365 aa).

Residue Y19 coordinates S-adenosyl-L-homocysteine. A caffeine-binding site is contributed by T26. The S-adenosyl-L-homocysteine site is built by C62, N67, D99, L100, S134, and F135. Positions 152, 155, and 156 each coordinate caffeine. N173 provides a ligand contact to Mg(2+). Caffeine is bound at residue H221. Mg(2+) contacts are provided by D259, F261, and N262. Caffeine is bound at residue F317.

The protein belongs to the methyltransferase superfamily. Type-7 methyltransferase family. Mg(2+) is required as a cofactor.

The catalysed reaction is 1,7-dimethylxanthine + S-adenosyl-L-methionine = caffeine + S-adenosyl-L-homocysteine + H(+). The enzyme catalyses 7-methylxanthine + S-adenosyl-L-methionine = theobromine + S-adenosyl-L-homocysteine + H(+). The protein operates within alkaloid biosynthesis. Involved in the biosynthesis of caffeine. Catalyzes the conversion of 7-methylxanthine (7mX) to theobromine, and, to some extent, the conversion of paraxanthine to caffeine, but seems not able to convert theobromine to caffeine. The polypeptide is 7-methylxanthine methyltransferase PCS1 (Camellia ptilophylla (Cocoa tea)).